Consider the following 1174-residue polypeptide: DNA-directed RNA polymerase subunit beta (1174 aa).

Belongs to the RNA polymerase beta chain family. In terms of assembly, the RNAP catalytic core consists of 2 alpha, 1 beta, 1 beta' and 1 omega subunit. When a sigma factor is associated with the core the holoenzyme is formed, which can initiate transcription.

It carries out the reaction RNA(n) + a ribonucleoside 5'-triphosphate = RNA(n+1) + diphosphate. Its function is as follows. DNA-dependent RNA polymerase catalyzes the transcription of DNA into RNA using the four ribonucleoside triphosphates as substrates. This is DNA-directed RNA polymerase subunit beta from Mycolicibacterium gilvum (strain PYR-GCK) (Mycobacterium gilvum (strain PYR-GCK)).